The primary structure comprises 384 residues: MAGAEWKSLEECLEKHLPLPDLQEVKRVLYGKELRKLDLPREAFEAASREDFELQGYAFEAAEEQLRRPRIVHVGLVQNRIPLPANAPVAEQVSALHRRIKAIVEVAAMCGVNIICFQEAWTMPFAFCTREKLPWTEFAESAEDGPTTRFCQKLAKNHDMVVVSPILERDSEHGDVLWNTAVVISNSGAVLGKTRKNHIPRVGDFNESTYYMEGNLGHPVFQTQFGRIAVNICYGRHHPLNWLMYSINGAEIIFNPSATIGALSESLWSIEARNAAIANHCFTCAINRVGTEHFPNEFTSGDGKKAHQDFGYFYGSSYVAAPDGSRTPGLSRSQDGLLVAKLDLNLCQQVNDVWNFKMTGRYEMYARELAEAVKSNYSPTIVKE.

The CN hydrolase domain maps to 72-344 (VHVGLVQNRI…DGLLVAKLDL (273 aa)). Catalysis depends on Glu-119, which acts as the Proton acceptor. Lys-196 acts as the Proton donor in catalysis. Cys-233 acts as the Nucleophile in catalysis. Position 378 is a phosphoserine (Ser-378).

It belongs to the carbon-nitrogen hydrolase superfamily. BUP family. As to quaternary structure, homodimer, homotetramer, homooctamer; can also form higher homooligomers.

The protein resides in the cytoplasm. The catalysed reaction is 3-(carbamoylamino)propanoate + H2O + 2 H(+) = beta-alanine + NH4(+) + CO2. The enzyme catalyses 3-(carbamoylamino)-2-methylpropanoate + H2O + 2 H(+) = (R)-3-amino-2-methylpropanoate + NH4(+) + CO2. It functions in the pathway amino-acid biosynthesis; beta-alanine biosynthesis. Catalyzes a late step in pyrimidine degradation. Converts N-carbamoyl-beta-alanine (3-ureidopropanoate) into beta-alanine, ammonia and carbon dioxide. Likewise, converts N-carbamoyl-beta-aminoisobutyrate (3-ureidoisobutyrate) into beta-aminoisobutyrate, ammonia and carbon dioxide. This chain is Beta-ureidopropionase (UPB1), found in Pongo abelii (Sumatran orangutan).